The chain runs to 44 residues: Large ribosomal subunit protein bL34 (44 aa).

The protein belongs to the bacterial ribosomal protein bL34 family.

This chain is Large ribosomal subunit protein bL34, found in Wolbachia pipientis wMel.